Reading from the N-terminus, the 550-residue chain is Transcription factor 7-like 1-D (550 aa).

The interaction with CTNNB1-A stretch occupies residues 1-61 (MPQLNSGXGD…SENHSSDSDS (61 aa)). Disordered stretches follow at residues 1 to 77 (MPQL…EKPR), 182 to 212 (GTPP…PYYP), 390 to 473 (WSAR…SLTT), and 488 to 514 (ASKS…SRPI). Composition is skewed to basic and acidic residues over residues 17 to 32 (ELIR…EKSP) and 52 to 77 (SENH…EKPR). The interaction with AES and TLE4-A stretch occupies residues 109-311 (LGGITCPMVP…SPNLSMKSNV (203 aa)). The HMG box DNA-binding region spans 323 to 391 (IKKPLNAFML…LHSQLYPSWS (69 aa)). Residues 406–415 (KQSPEMENYT) show a composition bias toward basic and acidic residues. The interval 407–550 (QSPEMENYTK…PLPLVARSSD (144 aa)) is interaction with CTBP-B. Residues 444-455 (SPATPSAALASP) show a composition bias toward low complexity.

It belongs to the TCF/LEF family. As to quaternary structure, interacts with csnk1e, ctnnb1-A, ctbp-B, dact1-A and gsk3b. May interact with ase and tle4-A. In terms of processing, phosphorylated. Phosphorylation by csnk1e promotes binding to ctnnb1-A while phosphorylation by gsk3b may reverse this effect.

The protein localises to the nucleus. Functionally, participates in the Wnt signaling pathway. Binds to DNA and acts as a repressor in the absence of ctnnb1-A and possibly ctnnb1-B, and as an activator in the presence of these proteins. Required early in development for the establishment of the dorsal body axis in response to maternal Wnt signaling. The polypeptide is Transcription factor 7-like 1-D (tcf7l1-d) (Xenopus laevis (African clawed frog)).